Reading from the N-terminus, the 541-residue chain is MQLEQKSSLHCSKCRNFLQKFSQDMQAWNCRELDSPLPSDITLHNLEPARPDSGMSFSTDFDDDFFNLDLHQQERSASFGGVTQYSQQFLREKCSFSPYFHTSLETVDSGRTSLYGSNEQCGQLGGASSNGSTAMLHTPDGSNSHQTSFPSDFRMSESPDDTVSGKKTTTRRNAWGNMSYAELITTAIMASPEKRLTLAQVYEWMVQNVPYFRDKGDSNSSAGWKNSIRHNLSLHSRFMRIQNEGAGKSSWWVINPDAKPGRNPRRTRERSNTIETTTKAQLEKSRRGAKKRIKERALMGSLHSTLNGNSIAGSIQTISHDLYDDDSMQGAFDNVPSSFRPRTQSNLSIPGSSSRVSPAIGSDIYDDLEFPSWVGESVPAIPSDIVDRTDQMRIDATTHIGGVQIKQESKPIKTEPIAPPPSYHELNSVRGSCAQNPLLRNPIVPSTNFKPMPLPGAYGNYQNGGITPINWLSTSNSSPLPGIQSCGIVAAQHTVASSSALPIDLENLTLPDQPLMDTMDVDALIRHELSQAGGQHIHFDL.

The span at 118–150 shows a compositional bias: polar residues; that stretch reads NEQCGQLGGASSNGSTAMLHTPDGSNSHQTSFP. 2 disordered regions span residues 118–168 and 252–291; these read NEQC…GKKT and WVINPDAKPGRNPRRTRERSNTIETTTKAQLEKSRRGAKK. Residues 175–268 constitute a DNA-binding region (fork-head); the sequence is WGNMSYAELI…KPGRNPRRTR (94 aa). Phosphothreonine is present on Thr-273. Ser-319 bears the Phosphoserine; by CaMK2 mark.

Interacts with rle-1. Interacts with unc-43 and tax-6. Interacts with jnk-1. Interacts with ftt-2. Interacts with prmt-1. Interacts with hcf-1. Post-translationally, phosphorylated by akt-1 and/or akt-2. Phosphorylated by sgk-1. Phosphorylated by unc-43. Phosphorylated by jnk-1. Dephosphorylated by tax-6 in vitro. In terms of processing, ubiquitinated. Ubiquitination by rle-1 leads to proteasome-mediated degradation. Methylation by prmt-1 prevents phosphorylation and promotes translocation to the nucleus to allow for daf-16-dependent transcription. As to expression, isoform b and isoform c are expressed in ectoderm, muscles, intestine and neurons. Isoform b is also expressed in the pharynx. The intestine appears to be the primary site of longevity function.

The protein localises to the nucleus. It is found in the cytoplasm. In terms of biological role, forkhead-type transcription factor. Binds to the promoters of genes that contain the daf-16/FOXO binding element (DBE), TTGTTTAC, in their regulatory region. Functions in the Insulin/IGF-1-like signaling (IIS) mediated pathway which affects lipogenesis, lifespan, starvation survival, heat shock and oxidative stress responses, sleep, associative memory, and dauer formation. Longevity signaling predominantly arises from expression in the intestine. Acts in the intestine to mediate the role of slo-1 in age-associated decline in motor activity and longevity. Transcriptional activity of daf-16/FOXO is negatively regulated by interaction with host cell factor homolog hcf-1; and by cytoplasmic sequestration by association with ftt-2. Inhibition is required for the carbon dioxide (CO2) avoidance response. Upon loss of inhibition, daf-16 translocates to the nucleus to regulate genes that result in delayed reproduction and growth while increasing stress resistance starvation tolerance and longevity. Association with arginine methyltransferase prmt-1 prevents phosphorylation and allows for translocation to the nucleus and the subsequent transcription of longevity-related genes. Modulation of its activity by cGMP levels in sensory neurons regulates lifespan. Has a protective role against muscle dystrophy. Involved in mediating protection against aberrant protein aggregation proteotoxicity. Influences transcription of genes that code for proteins involved in immunity as part of a general stress response. Targets genes that inhibit and stimulate tumor growth. Targets kinases, phosphatases and transcription factors that are primarily involved in signaling and gene regulation. Thought to regulate ins-7 in FOXO-to-FOXO signaling, which coordinates daf-16 expression. Activity is positively regulated by shc-1-mediated inhibition of daf-2 and activation of JNK pathway. Through the regulation of its activity by shc-1-mediated inhibition of daf-2 and activation of JNK pathway, plays a role in maintaining the integrity of the gonad. Functions by indirect interaction with jnk-1 of the mitogen-activated protein kinase (MAPK) pathway. Involved in increased proteasome activity by activating expression of rpn-6.1 in response to proteotoxic stress, leading to enhanced assembly of the 26S proteasome, followed by higher proteasome activity. Also regulates proteasome activity in the intestine by preventing expression of deubiquitinase ubh-4. Represses transcription of natc-1. Involved in regulation of srh-234 expression. Binds to the promoter of the AMPK-gamma regulatory subunit, aakg-4, and activates its transcription. Also activates transcription of AMPK-gamma regulatory subunit, aakg-1. Maintains endoplasmic reticulum (ER) function by inducing protein degradation and elimination to remove misfolded secretory proteins from the ER independently of the ire-1/xbp-1 unfolded protein response pathway. Regulates epidermal innate immunity to nematophagous fungal infection and physical wounding which trigger bli-3 induced ROS release, leading to daf-16 activation independently of daf-2 signaling. May negatively regulate resistance to stress caused by oxidized cholesterol adducts by preventing the activation of daf-9 and nuclear hormone receptor daf-12, two members of the steroid signaling pathway. Promotes apoptosis during embryonic development. Probably through the regulation of the autophagy genes atg-18 and atg-16.2, plays a role in regulating stem cell number in the germline during larval development. Plays a role in learning and memory; including associative memory, and aversive gustatory associated learning known as salt avoidance learning. Plays a role in regulating gene transcription in response to white light exposure. Binds to the promoter of dex-1 to positively regulate its expression in seam cells during the dauer phase. Plays a role in transgenerational lipid accumulation in response to a high-fat diet. Its function is as follows. Functions in the Insulin/IGF-1-like signaling (IIS) mediated pathway. May play a role in lifespan modulation, but less significant than that played by isoforms d and f. Functions in the Insulin/IGF-1-like signaling (IIS) mediated pathway. Transcript level in the early adult may play a role in lifespan modulation, but effect is more significant than that played by isoform a. The polypeptide is Forkhead box protein O (Caenorhabditis elegans).